A 326-amino-acid chain; its full sequence is Metal-binding protein YtgA (326 aa).

An N-terminal signal peptide occupies residues 1–21; the sequence is MFFLHVRKYKHVIGGLLCLAG. Fe(2+) contacts are provided by His75, His141, His207, and Asp299.

This sequence belongs to the bacterial solute-binding protein 9 family. Monomer.

It is found in the periplasm. Its function is as follows. Part of the ATP-binding cassette (ABC) transport system YtgABCD involved in metal import. Binds Fe(2+), Mn(2+) and Ni(2+), with a preference for Fe(2+) and delivers them to the membrane permease for translocation into the cytoplasm. The sequence is that of Metal-binding protein YtgA from Chlamydia muridarum (strain MoPn / Nigg).